We begin with the raw amino-acid sequence, 635 residues long: Threonine--tRNA ligase (635 aa).

The TGS domain maps to 1–61 (MINISFPDGS…ENDCKLRILT (61 aa)). A catalytic region spans residues 242 to 533 (DHRKLGKELD…LIEEYAGCFP (292 aa)). Zn(2+)-binding residues include C333, H384, and H510.

This sequence belongs to the class-II aminoacyl-tRNA synthetase family. As to quaternary structure, homodimer. Requires Zn(2+) as cofactor.

It is found in the cytoplasm. The catalysed reaction is tRNA(Thr) + L-threonine + ATP = L-threonyl-tRNA(Thr) + AMP + diphosphate + H(+). Functionally, catalyzes the attachment of threonine to tRNA(Thr) in a two-step reaction: L-threonine is first activated by ATP to form Thr-AMP and then transferred to the acceptor end of tRNA(Thr). Also edits incorrectly charged L-seryl-tRNA(Thr). This Rickettsia akari (strain Hartford) protein is Threonine--tRNA ligase.